Consider the following 369-residue polypeptide: Beta-1,4-galactosyltransferase 2 (369 aa).

Residues 1-15 (MSRLLGGTLERVCKA) lie on the Cytoplasmic side of the membrane. A helical; Signal-anchor for type II membrane protein membrane pass occupies residues 16 to 36 (VLLLCLLHFLVAVILYFDVYA). At 37 to 369 (QHLAFFSRFS…GRPMSWLNQG (333 aa)) the chain is on the lumenal side. The span at 59-75 (SSSTNCSRPNATASSSG) shows a compositional bias: polar residues. Positions 59-90 (SSSTNCSRPNATASSSGLPEVPSARPGPTAPV) are disordered. N63 and N68 each carry an N-linked (GlcNAc...) asparagine glycan. A disulfide bond links C94 and C136. UDP-alpha-D-galactose-binding positions include 147–151 (PFRHR), 186–188 (FNR), 214–215 (VD), and W275. Residues C208 and C227 are joined by a disulfide bond. D215 serves as a coordination point for Mn(2+). Position 277–280 (277–280 (GEDD)) interacts with N-acetyl-D-glucosamine. Mn(2+) is bound at residue H308. 308–310 (HDR) contributes to the UDP-alpha-D-galactose binding site. Residue R320 participates in N-acetyl-D-glucosamine binding. N354 is a glycosylation site (N-linked (GlcNAc...) asparagine).

This sequence belongs to the glycosyltransferase 7 family. Requires Mn(2+) as cofactor.

The protein localises to the golgi apparatus. Its subcellular location is the golgi stack membrane. The enzyme catalyses D-glucose + UDP-alpha-D-galactose = lactose + UDP + H(+). It carries out the reaction an N-acetyl-beta-D-glucosaminyl derivative + UDP-alpha-D-galactose = a beta-D-galactosyl-(1-&gt;4)-N-acetyl-beta-D-glucosaminyl derivative + UDP + H(+). The catalysed reaction is N-acetyl-D-glucosamine + UDP-alpha-D-galactose = beta-D-galactosyl-(1-&gt;4)-N-acetyl-D-glucosamine + UDP + H(+). Its pathway is protein modification; protein glycosylation. In terms of biological role, responsible for the synthesis of complex-type N-linked oligosaccharides in many glycoproteins as well as the carbohydrate moieties of glycolipids. Can produce lactose. This is Beta-1,4-galactosyltransferase 2 (B4GALT2) from Cricetulus griseus (Chinese hamster).